The chain runs to 256 residues: MADQPMIEMKNVTKVYDNGTVGLKNINLKINKGEFVVIVGLSGAGKSTLLRAINRLHDISEGDILIAGESITKTKGKNLRLMRRKIGMIFQSFNLVKRSSVLRNVSAGRLAYYPTWKTTFNLFTDEDKQRAYEALQSVGMAEKVYSRADELSGGQQQRVAIARVLTQRPEIILADEPTASLDPKTSRQVMEDLKMLNEKFDMTVVANLHSIELAKEFGHRVIGVRAGEIVYDGKMEDTPQSVFDNIYNGGKGKEED.

The ABC transporter domain occupies 7-251 (IEMKNVTKVY…VFDNIYNGGK (245 aa)). An ATP-binding site is contributed by 40 to 47 (GLSGAGKS).

The protein belongs to the ABC transporter superfamily. Phosphonates importer (TC 3.A.1.9.1) family. As to quaternary structure, the complex is composed of two ATP-binding proteins (PhnC), two transmembrane proteins (PhnE) and a solute-binding protein (PhnD).

It localises to the cell membrane. The enzyme catalyses phosphonate(out) + ATP + H2O = phosphonate(in) + ADP + phosphate + H(+). Functionally, part of the ABC transporter complex PhnCDE involved in phosphonates import. Responsible for energy coupling to the transport system. This chain is Phosphonates import ATP-binding protein PhnC, found in Lactobacillus delbrueckii subsp. bulgaricus (strain ATCC 11842 / DSM 20081 / BCRC 10696 / JCM 1002 / NBRC 13953 / NCIMB 11778 / NCTC 12712 / WDCM 00102 / Lb 14).